A 379-amino-acid chain; its full sequence is MALYRTARRPLQMMLFSRLGNPEQNYSSWARKDASQSAFGMFVRLFSAHAPAAAEQMSLIKQLRERTSAPIKDVKASLVDCNWDIEAAQKDLRKRGKVLASKKSGRAATEGLLALAQNEGKAALIELNCETDFVARNDIFQCLALSLAKQALLTENTAQQASGIHPVGPECLEDLMINLEHPKISGETTVQNAITEVAAMMGENVKLRRGFVMSTSLPGVLSTYLHTSPQPGLGRIAGLLSLEIEDGNSQLDVLHHVGSELAMHVVAAKPLFLTKELVSSDALESEREILKSQAESTGKSQMAIEKMVEGRLRKYYEEVVLMEQKFIINDAVNVKTVLNNLSKEVGSPVKIGSFFRMEVGEGIQRLEATSADEPVAQAA.

The transit peptide at 1–45 (MALYRTARRPLQMMLFSRLGNPEQNYSSWARKDASQSAFGMFVRL) directs the protein to the mitochondrion.

It belongs to the EF-Ts family.

The protein resides in the mitochondrion. Its function is as follows. Associates with the EF-Tu.GDP complex and induces the exchange of GDP to GTP. It remains bound to the aminoacyl-tRNA.EF-Tu.GTP complex up to the GTP hydrolysis stage on the ribosome. In Ricinus communis (Castor bean), this protein is Elongation factor Ts, mitochondrial.